Consider the following 22-residue polypeptide: uncharacterized protein (22 aa).

Belongs to the asfivirus C84L family.

This is an uncharacterized protein from Ornithodoros (relapsing fever ticks).